The chain runs to 275 residues: Enoyl-[acyl-carrier-protein] reductase [NADH] FabI (275 aa).

NAD(+)-binding positions include G13, 19-20 (SI), 64-65 (DV), and V92. A95 lines the substrate pocket. Residues Y145 and Y155 each act as proton acceptor in the active site. NAD(+) contacts are provided by residues K162 and 191-195 (IRTLA).

The protein belongs to the short-chain dehydrogenases/reductases (SDR) family. FabI subfamily. Homotetramer.

It carries out the reaction a 2,3-saturated acyl-[ACP] + NAD(+) = a (2E)-enoyl-[ACP] + NADH + H(+). Its pathway is lipid metabolism; fatty acid biosynthesis. Catalyzes the reduction of a carbon-carbon double bond in an enoyl moiety that is covalently linked to an acyl carrier protein (ACP). Involved in the elongation cycle of fatty acid which are used in the lipid metabolism. The sequence is that of Enoyl-[acyl-carrier-protein] reductase [NADH] FabI (fabI) from Helicobacter pylori (strain ATCC 700392 / 26695) (Campylobacter pylori).